Reading from the N-terminus, the 123-residue chain is WAP four-disulfide core domain protein 5 (123 aa).

An N-terminal signal peptide occupies residues Met-1–Gly-24. 2 WAP domains span residues Lys-27–Val-74 and Ser-75–Ala-121. 8 disulfides stabilise this stretch: Cys-34-Cys-62, Cys-41-Cys-66, Cys-49-Cys-61, Cys-55-Cys-70, Cys-81-Cys-109, Cys-88-Cys-113, Cys-96-Cys-108, and Cys-102-Cys-117.

Its subcellular location is the secreted. Putative acid-stable proteinase inhibitor. This is WAP four-disulfide core domain protein 5 (WFDC5) from Gorilla gorilla gorilla (Western lowland gorilla).